A 659-amino-acid chain; its full sequence is DNA ligase (659 aa).

NAD(+) is bound by residues 32 to 36 (DAEYD), 81 to 82 (SL), and E110. The N6-AMP-lysine intermediate role is filled by K112. The NAD(+) site is built by R133, E168, K284, and K308. C402, C405, C420, and C425 together coordinate Zn(2+). The BRCT domain occupies 582 to 659 (AKPQIFAGKS…SEEEFAELLP (78 aa)).

The protein belongs to the NAD-dependent DNA ligase family. LigA subfamily. The cofactor is Mg(2+). Mn(2+) is required as a cofactor.

The enzyme catalyses NAD(+) + (deoxyribonucleotide)n-3'-hydroxyl + 5'-phospho-(deoxyribonucleotide)m = (deoxyribonucleotide)n+m + AMP + beta-nicotinamide D-nucleotide.. DNA ligase that catalyzes the formation of phosphodiester linkages between 5'-phosphoryl and 3'-hydroxyl groups in double-stranded DNA using NAD as a coenzyme and as the energy source for the reaction. It is essential for DNA replication and repair of damaged DNA. The chain is DNA ligase from Desulfitobacterium hafniense (strain DSM 10664 / DCB-2).